The sequence spans 2748 residues: Chalcone synthase cfoA (2748 aa).

The adenylation (A) domain stretch occupies residues 13–511 (RHAGESCEKV…DTVPRTVIGK (499 aa)). In terms of domain architecture, Carrier 1 spans 535-620 (DLIEALVMAE…AVSTYLHGRL (86 aa)). Residue Ser-579 is modified to O-(pantetheine 4'-phosphoryl)serine. Positions 641–1073 (VEPIAIVSMA…GTNSHIILEQ (433 aa)) constitute a Ketosynthase family 3 (KS3) domain. Residues Cys-813, His-948, and His-995 each act as for beta-ketoacyl synthase activity in the active site. Positions 1196-1489 (FSGQGSWMPT…ATHGTVDKLL (294 aa)) constitute a Malonyl-CoA:ACP transacylase (MAT) domain. Residues 1561–1842 (LGHEMIFNAT…ENSFSMTMTD (282 aa)) form a dehydratase (DH) domain region. The N-terminal hotdog fold stretch occupies residues 1563 to 1707 (HEMIFNATSI…GTFQLISQPN (145 aa)). In terms of domain architecture, PKS/mFAS DH spans 1563–1866 (HEMIFNATSI…LRTWQPTVAG (304 aa)). The Proton acceptor; for dehydratase activity role is filled by His-1595. The tract at residues 1722–1866 (AESDVNISEA…LRTWQPTVAG (145 aa)) is C-terminal hotdog fold. Asp-1784 functions as the Proton donor; for dehydratase activity in the catalytic mechanism. Residues 2031 to 2210 (GTVLITGGTG…ALSLAWGPWA (180 aa)) form the Ketoreductase (KR) domain. Residues 2305 to 2383 (NRHDTLLGLV…ALVEYLLPRI (79 aa)) enclose the Carrier 2 domain. Position 2342 is an O-(pantetheine 4'-phosphoryl)serine (Ser-2342). Residues 2386 to 2426 (EPQPEVDTDSDASTTAGDTSVSRDSGKEDELSPSSSVTTLA) form a disordered region. Residues 2396-2407 (DASTTAGDTSVS) are compositionally biased toward low complexity. The interval 2519 to 2742 (VGLSVYSNLA…GAAGEIERWA (224 aa)) is thioester reductase (TE) domain.

It in the N-terminal section; belongs to the NRP synthetase family. Pantetheine 4'-phosphate serves as cofactor.

It functions in the pathway secondary metabolite biosynthesis; flavonoid biosynthesis. Its function is as follows. Hybrid PKS-NRPS synthetase; part of the gene cluster that mediates the biosynthesis of chlorflavonin, a fungal flavonoid with acetolactate synthase inhibitory activity. Within the pathway, the PKS-NRPS cfoA, is responsible for the generation of the key precursor chalcone. The adenylation (A) domain activates benzoic acid or p-hydroxybenzoic acid which are transferred to the thiol group of the pantetheinyl residue of the T domain, and further transferred to the adjacent PKS portion of cfoA. Within the PKS portion of cfoA, benzoic acid or p-hydroxybenzoic acid act as starter units for respectively four malonyl-CoA molecules for elongation by the AT and KS domains. Afterwards, chalcone is cyclized through Claisen condensation and thereby released either spontaneously or catalyzed by the TE domain. Then, a new type of chalcone isomerase, cfoK, catalyzes the conversion of the chalcone into a flavanone by a histidine-mediated oxa-Michael addition mechanism. The desaturation of flavanone to flavone is catalyzed by a new type of flavone synthase, the flavin mononucleotide (FMN)-dependent oxidoreductase cfoJ. Monooxygenases cfoF, cfoG, and P450 cfoH are responsible for the hydroxylation of the flavonoid skeleton at sites C3, C8, and C2', respectively. Like cfoF, the dehydratase cfoI plays also a role in the hydroxylation of position C3. Methyltransferases cfoB, cfoC, and cfoD then catalyze the methylation of C7-OH, C8-OH, and C3-OH, respectively. Finally, the monooxygenase cfoE is responsible for the chlorination of flavonoid at position C3'. The polypeptide is Chalcone synthase cfoA (Aspergillus candidus).